The primary structure comprises 422 residues: MRSVLSLALLAANVVTAAVVSPFDYSGYKVIRVPTQKDNVKEVQRVITDLNLDTWKYPKSEGQNADIVVPPSQISSFMERISGMNIEMMHEDLGLSIRNETSFEAYSAGYAPDINWFKSYHSYQDHLSYLQDLQGLFRTRSEYVDAGKSHEGRTIPALHIWGSGGKNSKPAIIFHGTIHAREWITTMVTEYMAWSFLSQYNKNADITSIVDNFDIWIFPIVNPDGFAFTQTSNRLWRKNRQPNPNARCPGRDLNRNYPYQWVGPGSSSNPCSDTYRGAQPGDGTEIKVHIANMKKIAANKGIAMFVDWHSYGQLFMSPYGYSCTARPPTDARHQELSRIFAQALKAVHGTPYKTGPICNTIYQVNGDSVDYALEVLKVKLSLTAELRDTGARGFVLPADQIIPSGEETLAGTVAMLKAVIQG.

Residues 1 to 17 (MRSVLSLALLAANVVTA) form the signal peptide. Positions 18 to 112 (AVVSPFDYSG…FEAYSAGYAP (95 aa)) are cleaved as a propeptide — activation peptide. The region spanning 119–419 (SYHSYQDHLS…AGTVAMLKAV (301 aa)) is the Peptidase M14 domain. Zn(2+) contacts are provided by His-179 and Glu-182. Substrate-binding positions include 179-182 (HARE), Arg-237, and 254-255 (NR). Cys-248 and Cys-271 are disulfide-bonded. His-309 is a Zn(2+) binding site. 310–311 (SY) contacts substrate. Glu-385 acts as the Proton donor/acceptor in catalysis.

Belongs to the peptidase M14 family. The cofactor is Zn(2+).

It is found in the secreted. Extracellular metalloprotease that contributes to pathogenicity. This chain is Metallocarboxypeptidase A (MCPA), found in Trichophyton rubrum (Athlete's foot fungus).